The sequence spans 174 residues: NADH-quinone oxidoreductase subunit B 2 (174 aa).

Cysteine 51, cysteine 52, cysteine 116, and cysteine 145 together coordinate [4Fe-4S] cluster.

It belongs to the complex I 20 kDa subunit family. In terms of assembly, NDH-1 is composed of 14 different subunits. Subunits NuoB, C, D, E, F, and G constitute the peripheral sector of the complex. Requires [4Fe-4S] cluster as cofactor.

The protein localises to the cell inner membrane. It carries out the reaction a quinone + NADH + 5 H(+)(in) = a quinol + NAD(+) + 4 H(+)(out). In terms of biological role, NDH-1 shuttles electrons from NADH, via FMN and iron-sulfur (Fe-S) centers, to quinones in the respiratory chain. The immediate electron acceptor for the enzyme in this species is believed to be ubiquinone. Couples the redox reaction to proton translocation (for every two electrons transferred, four hydrogen ions are translocated across the cytoplasmic membrane), and thus conserves the redox energy in a proton gradient. The polypeptide is NADH-quinone oxidoreductase subunit B 2 (Thermodesulfovibrio yellowstonii (strain ATCC 51303 / DSM 11347 / YP87)).